Consider the following 285-residue polypeptide: MSTRKQIFLCAINNILSGTCKEDCKFCTQSVRYHADIERYSYKKIGQIVEEARQAKANGALGYCLVTAGKGLDDKKVDFVARAAQAVKAEVEGLNLIACNGTASLEQLIYLKEHGIDSYNHNLETSERYYPEICLTHGWQERYETCENVKSSGLALCSGGIFGMGESMKDREDLLSAIASLQPESTPLNFYHPNPALPIKTRNIGFEEALNIIRRAHTLLGEDRLLMVAGGRELLFNGKEDEMFKAGANSIVIGDYLTTSGSAPKMDQLMLEKLGYEVATSCDSH.

One can recognise a Radical SAM core domain in the interval S2 to D223. [4Fe-4S] cluster is bound by residues C20, C24, and C27. Residues C64, C99, and C157 each coordinate [2Fe-2S] cluster.

The protein belongs to the radical SAM superfamily. Biotin synthase family. As to quaternary structure, homodimer. Requires [4Fe-4S] cluster as cofactor. [2Fe-2S] cluster is required as a cofactor.

The enzyme catalyses (4R,5S)-dethiobiotin + (sulfur carrier)-SH + 2 reduced [2Fe-2S]-[ferredoxin] + 2 S-adenosyl-L-methionine = (sulfur carrier)-H + biotin + 2 5'-deoxyadenosine + 2 L-methionine + 2 oxidized [2Fe-2S]-[ferredoxin]. Its pathway is cofactor biosynthesis; biotin biosynthesis; biotin from 7,8-diaminononanoate: step 2/2. In terms of biological role, catalyzes the conversion of dethiobiotin (DTB) to biotin by the insertion of a sulfur atom into dethiobiotin via a radical-based mechanism. This Sulfurovum sp. (strain NBC37-1) protein is Biotin synthase.